Here is a 309-residue protein sequence, read N- to C-terminus: Putative glycosyltransferase 48 (309 aa).

The protein belongs to the glycosyltransferase group 1 family. Glycosyltransferase 4 subfamily.

The polypeptide is Putative glycosyltransferase 48 (SIFV0048) (Saccharolobus islandicus (Sulfolobus islandicus)).